Reading from the N-terminus, the 409-residue chain is MGMFTKLTKSYTDGNLIIQILIGITIGGILGFIAHKSSVEAAIVVNAASMLGNLFVGALKAVAPILVFILVASSIIIKEFGQANGLKNIIILYLVGTFLASLSAVVVSFIFPTTLVLQNTSNALASAPQSIIVVLKDLVFKMVDNPVHAISSGNYIGILTWAIGTGIALRHSSIETKKIFKDISEGITRIVKFIIKLAPFGIFGLVATSVAEAGFEAIGGYAKLLLVLVGTMLFVAFVVNAAIVYFVTKQNPYPLIMTCIKESAVTAFFTRSSAANIPVNMSLCKKLNLDEKLYSISIPLGATINMAGAAVTIAVLSLSAVNTLNIQVGFLDALLLSIIAAIGACGASGVAGGSLMLIPLACSLFGISNDIAMQVVAVGFIIGVVQDSIETALNSSTDVLFTAIASQKS.

Helical transmembrane passes span Gly14 to Ala34, Gly57 to Ile77, Ile89 to Phe109, Ala149 to Leu169, Ile190 to Val210, Leu224 to Val244, Ile296 to Leu316, Ile338 to Ile358, and Phe365 to Val385.

The protein belongs to the dicarboxylate/amino acid:cation symporter (DAACS) (TC 2.A.23) family.

The protein resides in the cell inner membrane. The enzyme catalyses L-serine(in) + Na(+)(in) = L-serine(out) + Na(+)(out). It carries out the reaction L-threonine(in) + Na(+)(in) = L-threonine(out) + Na(+)(out). Its function is as follows. Involved in the import of serine and threonine into the cell, with the concomitant import of sodium (symport system). This is Serine/threonine transporter SstT from Campylobacter fetus subsp. fetus (strain 82-40).